Here is a 175-residue protein sequence, read N- to C-terminus: uncharacterized protein (175 aa).

This is an uncharacterized protein from Connochaetes taurinus (Blue wildebeest).